The following is a 233-amino-acid chain: Small ribosomal subunit protein uS3 (233 aa).

The KH type-2 domain maps to 39–107 (VRQFLMKKLV…PAQINISEVR (69 aa)).

Belongs to the universal ribosomal protein uS3 family. Part of the 30S ribosomal subunit. Forms a tight complex with proteins S10 and S14.

Binds the lower part of the 30S subunit head. Binds mRNA in the 70S ribosome, positioning it for translation. The protein is Small ribosomal subunit protein uS3 of Buchnera aphidicola subsp. Schizaphis graminum (strain Sg).